The primary structure comprises 250 residues: 2,3-bisphosphoglycerate-dependent phosphoglycerate mutase (250 aa).

Residues R10, H11, N17, G24, R62, E89, Y92, K100, R116, R117, H184, G185, and N186 each contribute to the (2R)-2,3-bisphosphoglycerate site. The active-site Tele-phosphohistidine intermediate is H11. G24 contributes to the (2R)-3-phosphoglycerate binding site. Residues E89, Y92, K100, R116, and R117 each contribute to the (2R)-3-phosphoglycerate site. The active-site Proton donor/acceptor is the E89. N186 provides a ligand contact to (2R)-3-phosphoglycerate.

Belongs to the phosphoglycerate mutase family. BPG-dependent PGAM subfamily. Ubiquitously expressed with the highest expression in the sub-tegumental muscle layer (at protein level). Expressed in the tegument (at protein level).

It is found in the tegument. The catalysed reaction is (2R)-2-phosphoglycerate = (2R)-3-phosphoglycerate. It functions in the pathway carbohydrate degradation; glycolysis; pyruvate from D-glyceraldehyde 3-phosphate: step 3/5. Its activity is regulated as follows. Strongly activated by 2,3-bisphosphoglycerate (2,3-BPG). Inhibited by vanadate in a dose-dependent manner. Catalyzes interconversion of 3- and 2-phosphoglycerate with 2,3-bisphosphoglycerate (2,3-BPG) as the primer of the reaction. Schistosomula have significant surface phosphoglycerate mutase activity also without 2,3-BPG. Binds human plasminogen and enhances its conversion to active thrombolytic plasmin in the presence of human tissue plasminogen activator (tPA) in vitro. Host-interactive surface protein, which may degrade vascular blood clots surrounding the worm in vivo and thus may help survival of the parasite in its host microenvironment. The protein is 2,3-bisphosphoglycerate-dependent phosphoglycerate mutase of Schistosoma mansoni (Blood fluke).